A 172-amino-acid chain; its full sequence is Adenine phosphoribosyltransferase (172 aa).

It belongs to the purine/pyrimidine phosphoribosyltransferase family. As to quaternary structure, homodimer.

It localises to the cytoplasm. The catalysed reaction is AMP + diphosphate = 5-phospho-alpha-D-ribose 1-diphosphate + adenine. The protein operates within purine metabolism; AMP biosynthesis via salvage pathway; AMP from adenine: step 1/1. Its function is as follows. Catalyzes a salvage reaction resulting in the formation of AMP, that is energically less costly than de novo synthesis. This is Adenine phosphoribosyltransferase from Polynucleobacter asymbioticus (strain DSM 18221 / CIP 109841 / QLW-P1DMWA-1) (Polynucleobacter necessarius subsp. asymbioticus).